Here is a 213-residue protein sequence, read N- to C-terminus: Peptide methionine sulfoxide reductase MsrA (213 aa).

Cysteine 52 is an active-site residue.

It belongs to the MsrA Met sulfoxide reductase family.

It carries out the reaction L-methionyl-[protein] + [thioredoxin]-disulfide + H2O = L-methionyl-(S)-S-oxide-[protein] + [thioredoxin]-dithiol. The enzyme catalyses [thioredoxin]-disulfide + L-methionine + H2O = L-methionine (S)-S-oxide + [thioredoxin]-dithiol. Functionally, has an important function as a repair enzyme for proteins that have been inactivated by oxidation. Catalyzes the reversible oxidation-reduction of methionine sulfoxide in proteins to methionine. This chain is Peptide methionine sulfoxide reductase MsrA, found in Enterobacter sp. (strain 638).